We begin with the raw amino-acid sequence, 149 residues long: Natriuretic peptides A (149 aa).

The signal sequence occupies residues 1-23 (MGSPIAASFLLFLAVQLLGQTGA). 2 consecutive propeptides follow at residues 24–121 (NPVY…AAPR) and 91–101 (DGGALGRSPWD). The tract at residues 49–103 (MPLEDEAESPQALSEQNAEAGAALSPLPEVPPWTGEVSPAQRDGGALGRSPWDSS) is disordered. Position 127 is a phosphoserine (Ser127). A disulfide bridge connects residues Cys128 and Cys144. The interval 145 to 149 (NSFRY) is important for degradation of atrial natriuretic peptide by IDE.

This sequence belongs to the natriuretic peptide family. Homodimer; disulfide-linked antiparallel dimer. Post-translationally, the precursor molecule is proteolytically cleaved by CORIN at Arg-121 to produce the atrial natriuretic peptide. Undergoes further proteolytic cleavage by unknown proteases to give rise to long-acting natriuretic peptide, vessel dilator and kaliuretic peptide. Additional processing gives rise to the auriculin and atriopeptin peptides. In the kidneys, alternative processing by an unknown protease results in the peptide urodilatin. Cleavage by MME initiates degradation of the factor and thereby regulates its activity. Degradation by IDE results in reduced activation of NPR1 (in vitro). During IDE degradation, the resulting products can temporarily stimulate NPR2 to produce cGMP, before the fragments are completely degraded and inactivated by IDE (in vitro). In terms of processing, degraded by IDE. Post-translationally, phosphorylation on Ser-127 decreases vasorelaxant activity.

The protein localises to the secreted. Its subcellular location is the perikaryon. It localises to the cell projection. Functionally, hormone that plays a key role in mediating cardio-renal homeostasis, and is involved in vascular remodeling and regulating energy metabolism. Acts by specifically binding and stimulating NPR1 to produce cGMP, which in turn activates effector proteins, such as PRKG1, that drive various biological responses. Regulates vasodilation, natriuresis, diuresis and aldosterone synthesis and is therefore essential for regulating blood pressure, controlling the extracellular fluid volume and maintaining the fluid-electrolyte balance. Also involved in inhibiting cardiac remodeling and cardiac hypertrophy by inducing cardiomyocyte apoptosis and attenuating the growth of cardiomyocytes and fibroblasts. Plays a role in female pregnancy by promoting trophoblast invasion and spiral artery remodeling in uterus, and thus prevents pregnancy-induced hypertension. In adipose tissue, acts in various cGMP- and PKG-dependent pathways to regulate lipid metabolism and energy homeostasis. This includes up-regulating lipid metabolism and mitochondrial oxygen utilization by activating the AMP-activated protein kinase (AMPK), and increasing energy expenditure by acting via MAPK11 to promote the UCP1-dependent thermogenesis of brown adipose tissue. Binds the clearance receptor NPR3 which removes the hormone from circulation. In terms of biological role, may have a role in cardio-renal homeostasis through regulation of natriuresis, diuresis, vasodilation, and inhibiting aldosterone synthesis. In vitro, promotes the production of cGMP and induces vasodilation. May promote natriuresis, at least in part, by enhancing prostaglandin E2 synthesis resulting in the inhibition of renal Na+-K+-ATPase. However reports on the involvement of this peptide in mammal blood volume and blood pressure homeostasis are conflicting; according to a report, in vivo it is not sufficient to activate cGMP and does not inhibit collecting duct transport nor effect diuresis and natriuresis. Appears to bind to specific receptors that are distinct from the receptors bound by atrial natriuretic peptide and vessel dilator. Possibly enhances protein excretion in urine by decreasing proximal tubular protein reabsorption. May have a role in cardio-renal homeostasis through regulation of natriuresis, diuresis, and vasodilation. In vitro, promotes the production of cGMP and induces vasodilation. May promote natriuresis, at least in part, by enhancing prostaglandin E2 synthesis resulting in the inhibition of renal Na+-K+-ATPase. However reports on the involvement of this peptide in mammal blood volume and blood pressure homeostasis are conflicting; according to a report it is not sufficient to activate cGMP and does not inhibit collecting duct transport nor effect diuresis and natriuresis. Appears to bind to specific receptors that are distinct from the receptors bound by the atrial natriuretic and long-acting natriuretic peptides. Possibly functions in protein excretion in urine by maintaining the integrity of the proximal tubules and enhancing protein excretion by decreasing proximal tubular protein reabsorption. Its function is as follows. May have a role in cardio-renal homeostasis through regulation of diuresis and inhibiting aldosterone synthesis. In vitro, promotes the production of cGMP and induces vasodilation. May promote natriuresis, at least in part, by enhancing prostaglandin E2 synthesis resulting in the inhibition of renal Na+-K+-ATPase. May have a role in potassium excretion but not sodium excretion (natriuresis). Possibly enhances protein excretion in urine by decreasing proximal tubular protein reabsorption. Functionally, hormone produced in the kidneys that appears to be important for maintaining cardio-renal homeostasis. Mediates vasodilation, natriuresis and diuresis primarily in the renal system, in order to maintain the extracellular fluid volume and control the fluid-electrolyte balance. Specifically binds and stimulates cGMP production by renal transmembrane receptors, likely NPR1. Urodilatin not ANP, may be the natriuretic peptide responsible for the regulation of sodium and water homeostasis in the kidney. In terms of biological role, may have a role in cardio-renal homeostasis through regulation of natriuresis and vasodilation. In vivo promotes natriuresis and in vitro, vasodilates renal artery strips. May have a role in cardio-renal homeostasis through regulation of regulation of natriuresis and vasodilation. In vivo promotes natriuresis. In vitro, vasodilates intestinal smooth muscle but not smooth muscle strips. Its function is as follows. May have a role in cardio-renal homeostasis through regulation of natriuresis and vasodilation. In vivo promotes natriuresis. In vitro, selectively vasodilates intestinal and vascular smooth muscle strips. Functionally, may have a role in cardio-renal homeostasis through regulation of natriuresis and vasodilation. In vivo promotes natriuresis. In vitro, selectively vasodilates intestinal smooth muscle but not vascular smooth muscle strips. This chain is Natriuretic peptides A (NPPA), found in Canis lupus familiaris (Dog).